The sequence spans 338 residues: tRNA-specific 2-thiouridylase MnmA (338 aa).

Residues Ala6–Ser13 and Met32 contribute to the ATP site. The active-site Nucleophile is Cys92. A disulfide bridge connects residues Cys92 and Cys186. Gly116 is a binding site for ATP. Residues Lys134–Gln136 form an interaction with tRNA region. The Cysteine persulfide intermediate role is filled by Cys186. An interaction with tRNA region spans residues Arg288–Tyr289.

The protein belongs to the MnmA/TRMU family.

The protein resides in the cytoplasm. The catalysed reaction is S-sulfanyl-L-cysteinyl-[protein] + uridine(34) in tRNA + AH2 + ATP = 2-thiouridine(34) in tRNA + L-cysteinyl-[protein] + A + AMP + diphosphate + H(+). Catalyzes the 2-thiolation of uridine at the wobble position (U34) of tRNA, leading to the formation of s(2)U34. The polypeptide is tRNA-specific 2-thiouridylase MnmA (Campylobacter jejuni subsp. jejuni serotype O:2 (strain ATCC 700819 / NCTC 11168)).